The sequence spans 63 residues: Large ribosomal subunit protein uL29 (63 aa).

This sequence belongs to the universal ribosomal protein uL29 family.

This is Large ribosomal subunit protein uL29 from Tolumonas auensis (strain DSM 9187 / NBRC 110442 / TA 4).